A 283-amino-acid polypeptide reads, in one-letter code: ATP phosphoribosyltransferase (283 aa).

It belongs to the ATP phosphoribosyltransferase family. Long subfamily. As to quaternary structure, equilibrium between an active dimeric form, an inactive hexameric form and higher aggregates. Interconversion between the various forms is largely reversible and is influenced by the natural substrates and inhibitors of the enzyme. The cofactor is Mg(2+).

It localises to the cytoplasm. The catalysed reaction is 1-(5-phospho-beta-D-ribosyl)-ATP + diphosphate = 5-phospho-alpha-D-ribose 1-diphosphate + ATP. The protein operates within amino-acid biosynthesis; L-histidine biosynthesis; L-histidine from 5-phospho-alpha-D-ribose 1-diphosphate: step 1/9. With respect to regulation, feedback inhibited by histidine. In terms of biological role, catalyzes the condensation of ATP and 5-phosphoribose 1-diphosphate to form N'-(5'-phosphoribosyl)-ATP (PR-ATP). Has a crucial role in the pathway because the rate of histidine biosynthesis seems to be controlled primarily by regulation of HisG enzymatic activity. The polypeptide is ATP phosphoribosyltransferase (Mycobacterium sp. (strain KMS)).